Here is a 1109-residue protein sequence, read N- to C-terminus: Cation channel sperm-associated auxiliary subunit beta (1109 aa).

Over 1–1055 (MESPLIYVML…QIYVDEVPLP (1055 aa)) the chain is Extracellular. C35 and C60 form a disulfide bridge. 3 N-linked (GlcNAc...) asparagine glycosylation sites follow: N66, N90, and N118. An intrachain disulfide couples C189 to C302. N-linked (GlcNAc...) asparagine glycosylation is present at N321. C330 and C343 form a disulfide bridge. N-linked (GlcNAc...) asparagine glycosylation is present at N672. Disulfide bonds link C720–C818, C831–C1039, C913–C922, and C924–C939. 2 N-linked (GlcNAc...) asparagine glycosylation sites follow: N915 and N923. The N-linked (GlcNAc...) asparagine glycan is linked to N1017. The helical transmembrane segment at 1056 to 1078 (FPGHALIAVATSVVLGVLIFIAF) threads the bilayer. The Cytoplasmic portion of the chain corresponds to 1079-1109 (VFQLRNIHPLKALKKSIRGNPGLTSSTTVSS).

In terms of assembly, component of the CatSper complex or CatSpermasome composed of the core pore-forming members CATSPER1, CATSPER2, CATSPER3 and CATSPER4 as well as auxiliary members CATSPERB, CATSPERG2, CATSPERD, CATSPERE, CATSPERZ, C2CD6/CATSPERT, SLCO6C1, TMEM249, TMEM262 and EFCAB9. HSPA1 may be an additional auxiliary complex member. The core complex members CATSPER1, CATSPER2, CATSPER3 and CATSPER4 form a heterotetrameric channel. The auxiliary CATSPERB, CATSPERG2, CATSPERD and CATSPERE subunits form a pavilion-like structure over the pore which stabilizes the complex through interactions with CATSPER4, CATSPER3, CATSPER1 and CATSPER2 respectively. SLCO6C1 interacts with CATSPERE and TMEM262/CATSPERH interacts with CATSPERB, further stabilizing the complex. C2CD6/CATSPERT interacts at least with CATSPERD and is required for targeting the CatSper complex in the flagellar membrane. In terms of tissue distribution, testis-specific. Specifically present in the principal piece of sperm tail (at protein level). Specifically expressed in the seminiferous tubules but not in the interstitial cells. Within the tubules, it is expressed in spermatocytes and spermatids, but not in spermatogonia.

It localises to the cell projection. The protein resides in the cilium. It is found in the flagellum membrane. In terms of biological role, auxiliary component of the CatSper complex, a complex involved in sperm cell hyperactivation. Sperm cell hyperactivation is needed for sperm motility which is essential late in the preparation of sperm for fertilization. The chain is Cation channel sperm-associated auxiliary subunit beta from Mus musculus (Mouse).